Consider the following 573-residue polypeptide: Poly(ribitol-phosphate) beta-N-acetylglucosaminyltransferase TarS (573 aa).

Residues proline 9, aspartate 41, asparagine 68, arginine 76, 92–94 (DSD), arginine 127, and glutamate 178 contribute to the UDP-N-acetyl-alpha-D-glucosamine site. Residue aspartate 94 coordinates Mn(2+). Aspartate 179 functions as the Proton acceptor in the catalytic mechanism. UDP-N-acetyl-alpha-D-glucosamine is bound by residues arginine 207 and 211–213 (HMS).

Belongs to the glycosyltransferase 2 family. Homotrimer. Mn(2+) is required as a cofactor.

The catalysed reaction is 4-O-[(D-ribitylphospho)(n)-di{(2R)-glycerylphospho}]-N-acetyl-beta-D-mannosaminyl-(1-&gt;4)-N-acetyl-alpha-D-glucosaminyl di-trans,octa-cis-undecaprenyl diphosphate + n UDP-N-acetyl-alpha-D-glucosamine = 4-O-([2-N-acetyl-beta-D-glucosaminyl-1-D-ribitylphospho](n)-di{[2R]-1-glycerylphospho})-N-acetyl-beta-D-mannosaminyl-(1-&gt;4)-N-acetyl-alpha-D-glucosaminyl di-trans,octa-cis-undecaprenyl diphosphate + n UDP + n H(+). The protein operates within cell wall biogenesis; poly(ribitol phosphate) teichoic acid biosynthesis. Its function is as follows. Attaches beta-O-GlcNAc (beta-O-N-acetyl-D-glucosamine) residues to the C4 position of poly(RboP)-wall teichoic acids (WTAs). Prefers UDP-GlcNAc as a donor substrate and is specific for poly(ribitol phosphate) WTAs. Can also use UDP-Glc and UDP-GalNAc, but not UDP-galactose or UDP-glucuronic acid. Mediates beta-lactam resistance in methicillin resistant Staphylococcus aureus (MRSA) strains. The polypeptide is Poly(ribitol-phosphate) beta-N-acetylglucosaminyltransferase TarS (Staphylococcus aureus (strain MW2)).